The primary structure comprises 1412 residues: MENGVEHGVDESGENQVLSSSDGEGDCDGDGEVEGEVLQPPPPPPLQITNDCVGEGVQAEEGERAPATTGAVDVTPDPGPPPTDGAAPVAILEDNMCDKDVDSDAGDEDNDDETKENYEGFNGTGRTVTLQTLMAANVLQPGLGLMTIEYLGQKFVGDLLADGKIKSHETETIFLTPSAWAMHCKRIINPDKKSGCGWASVKYKGKKLDAYKNTYLRKCALQKETPLDDCELDAERKTDTPEIVVKRTVFAHNTVSNRNVVHDANMLIESVPFTSVGKLQPFLITVNSSALLLADFHCHLTVREVCGYLGGTWDMNTHTLSITKTYPCRSTRFDRQRAGEVERDIQKMMIQDQLLLVGWYHSHPKFQAEPTLRDCDAQLDYQIKMRGASDLTYTPCVSLIISPYYDENPTLESVVKCIWIVPPNENRQSMEYGRPMLMQYSVLPDKEIPEEVRSEIQLCVDYYSQYRSEMVKFRNIYNNDVTYNEKLKNTLYPKFPSKQSDKALWNWICAVLDCEQEDDFIPPKTIKIIDNDDLEVKEEDKPVVLMDLSGDVKINPPKEEQFSEAMGGLEDSGRKAEEESNAQAEQKASELKVMSLQEQLCMPSGLNMNPVRMLSPLATPNPTSLPPVLPNLGAPVLPATPSQLLPPQVPAVTAPPAITPAVTTSALTSALNASPRDSPITIQSNSASPAKFEVPVRASPSPAKSDTSSHASTSRTRNSPAPSPGKFSVSDIARNSPSITPNKYEAAAAALVPPAAACLPTANDLMAASLAQLAGQLPPNFLQGDLAALFQQQRKDYGSSSLNQLAAAAAKVGGSKQSNASASSGLNDPNVAAAVAAYSNSFNMPLPTGVGIGGSGNSNAHSSSKSKSERSSKSSSSSSSSNSSSTSNSYKTKLMKELDELKNDPLKMSELIRSPEYAALLLQQAEALGATTLGTLGFGSDYSYLTGAGLGVPAANALTGGQSSNSSSSKSSKSSPAAAAAAALSADYNNLIQASKLLGYDSYMQQSKQSNDLNAFLQQQMAVAAASIPPPPQTASSGSSNSSSSKKQQQLQQQQHQQQQQQQQQQAAAQADYTALLQTYTKLFDPNNQFAAAMSSNKHMAGAHNELSALLSSGVGVGGGASGGGSKQKQKDIQSDMLNQLLQLEKQDSEIKALLYRQNKAAADLDALFATPSGAVVGAGSSANAMKSGSSAGNSGVSGMSSPSSLSNQAAYYNALAQEKMQDYAAFFQQQHGKYGIPDPLSKTTLAANNMFMTPSALFKIQQESLSAMMMKPPKSTTPSSARTRESSASPALERLTPTKSASSGGSGGGGSNSNSGGKYNFSAVDLAISSVPSNTPSPAPSDGSSGSSHRRPSPDIGRLYGELAPPGALLGSGGVPKKRMEFASVADLAAPPPAKMPKNNMGDDILNLSHD.

A compositionally biased stretch (basic and acidic residues) spans 1–10 (MENGVEHGVD). Residues 1-123 (MENGVEHGVD…TKENYEGFNG (123 aa)) are disordered. Composition is skewed to acidic residues over residues 23 to 35 (GEGD…EVEG) and 103 to 114 (SDAGDEDNDDET). An RAMA domain is found at 113-219 (ETKENYEGFN…AYKNTYLRKC (107 aa)). The MPN domain occupies 284-420 (ITVNSSALLL…LESVVKCIWI (137 aa)). Histidine 361, histidine 363, and aspartate 374 together coordinate Zn(2+). Disordered regions lie at residues 554-589 (INPP…QKAS), 669-734 (SALN…DIAR), 853-891 (GGSG…NSYK), 1027-1066 (SIPP…QQQQ), 1271-1318 (MKPP…NSGG), 1330-1376 (SSVP…SGGV), and 1389-1412 (LAAP…LSHD). Residues 572–600 (SGRKAEEESNAQAEQKASELKVMSLQEQL) adopt a coiled-coil conformation. Phosphoserine is present on residues serine 699, serine 701, serine 705, serine 719, serine 723, and serine 728. Polar residues predominate over residues 702–720 (PAKSDTSSHASTSRTRNSP). 2 stretches are compositionally biased toward low complexity: residues 873-891 (KSSS…NSYK) and 1036-1066 (SSGS…QQQQ). The segment covering 1275-1290 (KSTTPSSARTRESSAS) has biased composition (polar residues). Serine 1288 and serine 1290 each carry phosphoserine. Threonine 1297 is modified (phosphothreonine). A compositionally biased stretch (low complexity) spans 1360–1370 (LYGELAPPGAL).

This sequence belongs to the peptidase M67 family.

Probable protease. This is MPN domain-containing protein CG4751 from Drosophila melanogaster (Fruit fly).